A 426-amino-acid chain; its full sequence is Glucose-6-phosphate isomerase (426 aa).

The active-site Proton donor is glutamate 282. Catalysis depends on residues histidine 303 and lysine 417.

Belongs to the GPI family.

Its subcellular location is the cytoplasm. It carries out the reaction alpha-D-glucose 6-phosphate = beta-D-fructose 6-phosphate. Its pathway is carbohydrate biosynthesis; gluconeogenesis. The protein operates within carbohydrate degradation; glycolysis; D-glyceraldehyde 3-phosphate and glycerone phosphate from D-glucose: step 2/4. In terms of biological role, catalyzes the reversible isomerization of glucose-6-phosphate to fructose-6-phosphate. The sequence is that of Glucose-6-phosphate isomerase from Aster yellows witches'-broom phytoplasma (strain AYWB).